Consider the following 231-residue polypeptide: ATP phosphoribosyltransferase (231 aa).

This sequence belongs to the ATP phosphoribosyltransferase family. Short subfamily. Heteromultimer composed of HisG and HisZ subunits.

Its subcellular location is the cytoplasm. The enzyme catalyses 1-(5-phospho-beta-D-ribosyl)-ATP + diphosphate = 5-phospho-alpha-D-ribose 1-diphosphate + ATP. It functions in the pathway amino-acid biosynthesis; L-histidine biosynthesis; L-histidine from 5-phospho-alpha-D-ribose 1-diphosphate: step 1/9. In terms of biological role, catalyzes the condensation of ATP and 5-phosphoribose 1-diphosphate to form N'-(5'-phosphoribosyl)-ATP (PR-ATP). Has a crucial role in the pathway because the rate of histidine biosynthesis seems to be controlled primarily by regulation of HisG enzymatic activity. The chain is ATP phosphoribosyltransferase from Brucella ovis (strain ATCC 25840 / 63/290 / NCTC 10512).